We begin with the raw amino-acid sequence, 332 residues long: Heptahelical transmembrane protein 1 (332 aa).

The interval 1–52 (MDQNGHNDEAETVSCGNGNCKSKIVPGDDHGGDESSGTKRRKKRKTQQKTMK) is disordered. Residues 1-98 (MDQNGHNDEA…VFSFHNESLN (98 aa)) are Cytoplasmic-facing. Basic and acidic residues predominate over residues 26-37 (PGDDHGGDESSG). Basic residues predominate over residues 38-52 (TKRRKKRKTQQKTMK). A helical transmembrane segment spans residues 99–119 (VWTHLIGFIFFVALTVANIIH). At 120–138 (HDGFFPVDAKSPGNVTRWP) the chain is on the extracellular side. Residues 139–159 (FFVFLGGSMFCLLASSICHLF) form a helical membrane-spanning segment. At 160-172 (CCHSKELNVFLLR) the chain is on the cytoplasmic side. A helical membrane pass occupies residues 173–193 (IDYAGITAMIITSFFPPIFYI). At 194–199 (FQCTPR) the chain is on the extracellular side. Residues 200 to 220 (WYFIYLAGITSMGIFTIITLF) form a helical membrane-spanning segment. Over 221-233 (TPSLSAPKYRAFR) the chain is Cytoplasmic. A helical transmembrane segment spans residues 234–254 (ALLFASMGLFGIVPAAHALVV). Topologically, residues 255 to 262 (NWGNPQRN) are extracellular. A helical membrane pass occupies residues 263 to 283 (VTLVYELLMAVFYLVGTGFYV). Residues 284–303 (GRVPERLKPGWFDRVGHSHQ) lie on the Cytoplasmic side of the membrane. The helical transmembrane segment at 304-324 (IFHVFVLLGALSHYAAALLFL) threads the bilayer. Topologically, residues 325-332 (DWRDHVGC) are extracellular.

This sequence belongs to the ADIPOR family. Interacts (via N-terminus) with SCRM/ICE1. Expressed in roots, hypocotyls, vasculature of cotyledons and leaves, hydathodes and guard cells. In reproductive organs, expressed in trichomes, veins of sepals, stamens and stigmata of pistils.

It localises to the membrane. In terms of biological role, may act as a negative regulator of abscisic acid (ABA)-mediated osmotic stress signaling and function in cross-talk between cold and osmotic signaling. The chain is Heptahelical transmembrane protein 1 (HHP1) from Arabidopsis thaliana (Mouse-ear cress).